The chain runs to 87 residues: Small ribosomal subunit protein bS20 (87 aa).

This sequence belongs to the bacterial ribosomal protein bS20 family.

Its function is as follows. Binds directly to 16S ribosomal RNA. The polypeptide is Small ribosomal subunit protein bS20 (Parvibaculum lavamentivorans (strain DS-1 / DSM 13023 / NCIMB 13966)).